A 59-amino-acid polypeptide reads, in one-letter code: Large ribosomal subunit protein bL32 (59 aa).

Basic residues predominate over residues 1-15 (MANPKRKQSKRRSAN). Positions 1–48 (MANPKRKQSKRRSANRRAANAFIAPEFAKDPTDGSAFRPHRVNPKNGM) are disordered.

The protein belongs to the bacterial ribosomal protein bL32 family.

The polypeptide is Large ribosomal subunit protein bL32 (Opitutus terrae (strain DSM 11246 / JCM 15787 / PB90-1)).